The chain runs to 185 residues: Probable RNA 2'-phosphotransferase (185 aa).

The protein belongs to the KptA/TPT1 family.

In terms of biological role, removes the 2'-phosphate from RNA via an intermediate in which the phosphate is ADP-ribosylated by NAD followed by a presumed transesterification to release the RNA and generate ADP-ribose 1''-2''-cyclic phosphate (APPR&gt;P). May function as an ADP-ribosylase. The polypeptide is Probable RNA 2'-phosphotransferase (Bacillus thuringiensis subsp. konkukian (strain 97-27)).